The chain runs to 254 residues: Imidazole glycerol phosphate synthase subunit HisF (254 aa).

Catalysis depends on residues aspartate 12 and aspartate 131.

The protein belongs to the HisA/HisF family. Heterodimer of HisH and HisF.

The protein resides in the cytoplasm. It catalyses the reaction 5-[(5-phospho-1-deoxy-D-ribulos-1-ylimino)methylamino]-1-(5-phospho-beta-D-ribosyl)imidazole-4-carboxamide + L-glutamine = D-erythro-1-(imidazol-4-yl)glycerol 3-phosphate + 5-amino-1-(5-phospho-beta-D-ribosyl)imidazole-4-carboxamide + L-glutamate + H(+). Its pathway is amino-acid biosynthesis; L-histidine biosynthesis; L-histidine from 5-phospho-alpha-D-ribose 1-diphosphate: step 5/9. In terms of biological role, IGPS catalyzes the conversion of PRFAR and glutamine to IGP, AICAR and glutamate. The HisF subunit catalyzes the cyclization activity that produces IGP and AICAR from PRFAR using the ammonia provided by the HisH subunit. The sequence is that of Imidazole glycerol phosphate synthase subunit HisF from Corynebacterium aurimucosum (strain ATCC 700975 / DSM 44827 / CIP 107346 / CN-1) (Corynebacterium nigricans).